Reading from the N-terminus, the 329-residue chain is MYG1 protein (329 aa).

This sequence belongs to the MYG1 family.

This chain is MYG1 protein, found in Dictyostelium discoideum (Social amoeba).